A 325-amino-acid chain; its full sequence is Helicase VP6-A (325 aa).

Disordered stretches follow at residues 1 to 122 (MLLA…GATG) and 185 to 230 (DLRR…EPAR). Composition is skewed to basic and acidic residues over residues 8 to 18 (VIKRSSEELKQ), 32 to 54 (EGGK…KDGE), 61 to 79 (GQKE…DRRI), and 92 to 105 (LGER…RGDG). Position 106 (Lys-106) interacts with ATP. Residues 106 to 122 (KVGGGGGDADAGVGATG) show a composition bias toward gly residues. Composition is skewed to basic and acidic residues over residues 185–203 (DLRR…ERGG) and 211–229 (HGDA…EEPA).

The protein belongs to the orbivirus VP6 family. As to quaternary structure, homohexamer.

The protein resides in the virion. It carries out the reaction ATP + H2O = ADP + phosphate + H(+). Functionally, ATP dependent RNA helicase essential for RNA packaging and viral transcription. Possesses ss- and dsRNA-binding capacity. This chain is Helicase VP6-A (Segment-9), found in Bluetongue virus 17 (isolate USA) (BTV 17).